Here is a 215-residue protein sequence, read N- to C-terminus: Urease accessory protein UreG (215 aa).

15–22 (GPVGSGKT) is a GTP binding site.

It belongs to the SIMIBI class G3E GTPase family. UreG subfamily. Homodimer. UreD, UreF and UreG form a complex that acts as a GTP-hydrolysis-dependent molecular chaperone, activating the urease apoprotein by helping to assemble the nickel containing metallocenter of UreC. The UreE protein probably delivers the nickel.

It localises to the cytoplasm. Facilitates the functional incorporation of the urease nickel metallocenter. This process requires GTP hydrolysis, probably effectuated by UreG. This is Urease accessory protein UreG from Alcanivorax borkumensis (strain ATCC 700651 / DSM 11573 / NCIMB 13689 / SK2).